The following is a 491-amino-acid chain: Cytochrome P450 2F2 (491 aa).

Cysteine 436 is a binding site for heme.

It belongs to the cytochrome P450 family. Heme serves as cofactor. As to expression, club cells in lung and liver.

It is found in the endoplasmic reticulum membrane. The protein localises to the microsome membrane. In terms of biological role, involved in the regio- and stereoselective transformation of naphthalene to trans-1R-hydroxy-2R-glutathionyl-1,2-dihydronaphthalene in the presence of glutathione and glutathione S-transferases. It specifically catalyzes the production of a very reactive and potentially toxic intermediate, the 2R,2S arene oxide, that is associated with necrosis of the unciliated bronchiolar epithelial cells or club cells in lung. The chain is Cytochrome P450 2F2 (Cyp2f2) from Mus musculus (Mouse).